Consider the following 432-residue polypeptide: Adenosylhomocysteinase (432 aa).

The disordered stretch occupies residues 1–24; the sequence is MSAYSPLSAQLDADTDVDVESTRT. Positions 137 and 162 each coordinate substrate. Position 163–165 (163–165) interacts with NAD(+); sequence TTT. The substrate site is built by lysine 192 and aspartate 196. Residues asparagine 197, 226–231, glutamate 249, asparagine 284, 305–307, and asparagine 352 contribute to the NAD(+) site; these read GYGYCG and AGH.

It belongs to the adenosylhomocysteinase family. Requires NAD(+) as cofactor.

It is found in the cytoplasm. The enzyme catalyses S-adenosyl-L-homocysteine + H2O = L-homocysteine + adenosine. The protein operates within amino-acid biosynthesis; L-homocysteine biosynthesis; L-homocysteine from S-adenosyl-L-homocysteine: step 1/1. Its function is as follows. May play a key role in the regulation of the intracellular concentration of adenosylhomocysteine. This Haloquadratum walsbyi (strain DSM 16854 / JCM 12705 / C23) protein is Adenosylhomocysteinase.